The chain runs to 256 residues: 5'-nucleotidase SurE (256 aa).

The a divalent metal cation site is built by D8, D9, S40, and N92.

Belongs to the SurE nucleotidase family. A divalent metal cation serves as cofactor.

The protein localises to the cytoplasm. It catalyses the reaction a ribonucleoside 5'-phosphate + H2O = a ribonucleoside + phosphate. In terms of biological role, nucleotidase that shows phosphatase activity on nucleoside 5'-monophosphates. The protein is 5'-nucleotidase SurE of Sinorhizobium fredii (strain NBRC 101917 / NGR234).